The chain runs to 452 residues: Lichenan permease IIC component (452 aa).

Residues 8–421 (LEEKVMPIAG…AVSFVVYYPF (414 aa)) form the PTS EIIC type-3 domain. The next 10 helical transmembrane spans lie at 31–51 (GIIL…IGNL), 72–92 (LAYP…FGIA), 104–124 (LSAG…QVPF), 138–158 (GIPL…IAMV), 187–207 (FVAL…RLIV), 218–238 (IVSV…GGSL), 246–266 (LLWA…APIW), 291–311 (FFDI…VVTM), 351–373 (LLLP…MSTG), and 402–422 (SGAV…YPFF).

The protein localises to the cell membrane. Its function is as follows. The phosphoenolpyruvate-dependent sugar phosphotransferase system (PTS), a major carbohydrate active -transport system, catalyzes the phosphorylation of incoming sugar substrates concomitant with their translocation across the cell membrane. This system is involved in lichenan transport. In Bacillus subtilis (strain 168), this protein is Lichenan permease IIC component (licC).